Here is a 364-residue protein sequence, read N- to C-terminus: Probable dual-specificity RNA methyltransferase RlmN (364 aa).

The active-site Proton acceptor is the glutamate 107. Residues 113-346 (HEYGNSVCVT…ATIRREQGAD (234 aa)) form the Radical SAM core domain. A disulfide bridge links cysteine 120 with cysteine 351. [4Fe-4S] cluster is bound by residues cysteine 127, cysteine 131, and cysteine 134. Residues 177–178 (GE), serine 209, 232–234 (SLH), and asparagine 308 contribute to the S-adenosyl-L-methionine site. Cysteine 351 (S-methylcysteine intermediate) is an active-site residue.

The protein belongs to the radical SAM superfamily. RlmN family. [4Fe-4S] cluster serves as cofactor.

The protein localises to the cytoplasm. It carries out the reaction adenosine(2503) in 23S rRNA + 2 reduced [2Fe-2S]-[ferredoxin] + 2 S-adenosyl-L-methionine = 2-methyladenosine(2503) in 23S rRNA + 5'-deoxyadenosine + L-methionine + 2 oxidized [2Fe-2S]-[ferredoxin] + S-adenosyl-L-homocysteine. The enzyme catalyses adenosine(37) in tRNA + 2 reduced [2Fe-2S]-[ferredoxin] + 2 S-adenosyl-L-methionine = 2-methyladenosine(37) in tRNA + 5'-deoxyadenosine + L-methionine + 2 oxidized [2Fe-2S]-[ferredoxin] + S-adenosyl-L-homocysteine. Specifically methylates position 2 of adenine 2503 in 23S rRNA and position 2 of adenine 37 in tRNAs. Confers resistance to some classes of antibiotics. The protein is Probable dual-specificity RNA methyltransferase RlmN of Staphylococcus saprophyticus subsp. saprophyticus (strain ATCC 15305 / DSM 20229 / NCIMB 8711 / NCTC 7292 / S-41).